The following is a 276-amino-acid chain: Extracellular metalloprotease VDBG_07883 (276 aa).

Positions 1–17 (MQSKFLWIAAASAATAA) are cleaved as a signal peptide. 2 N-linked (GlcNAc...) asparagine glycosylation sites follow: N70 and N102. Residue H191 coordinates Zn(2+). The active site involves E192. H195 lines the Zn(2+) pocket. N222 carries an N-linked (GlcNAc...) asparagine glycan. Cysteines 227 and 254 form a disulfide.

The protein belongs to the peptidase M43B family.

The protein localises to the secreted. In terms of biological role, secreted metalloproteinase that allows assimilation of proteinaceous substrates. In Verticillium alfalfae (strain VaMs.102 / ATCC MYA-4576 / FGSC 10136) (Verticillium wilt of alfalfa), this protein is Extracellular metalloprotease VDBG_07883.